A 106-amino-acid polypeptide reads, in one-letter code: Cytochrome c (106 aa).

Heme c is bound by residues cysteine 17, cysteine 20, and histidine 21. At lysine 75 the chain carries N6,N6,N6-trimethyllysine. Heme c is bound at residue methionine 83.

Belongs to the cytochrome c family. In terms of processing, binds 1 heme c group covalently per subunit.

The protein resides in the mitochondrion intermembrane space. Electron carrier protein. The oxidized form of the cytochrome c heme group can accept an electron from the heme group of the cytochrome c1 subunit of cytochrome reductase. Cytochrome c then transfers this electron to the cytochrome oxidase complex, the final protein carrier in the mitochondrial electron-transport chain. This chain is Cytochrome c (CYC1), found in Gibberella zeae (strain ATCC MYA-4620 / CBS 123657 / FGSC 9075 / NRRL 31084 / PH-1) (Wheat head blight fungus).